The sequence spans 173 residues: C-phycocyanin beta subunit (173 aa).

N73 bears the N4-methylasparagine mark. (2R,3E)-phycocyanobilin is bound by residues C83 and C154.

The protein belongs to the phycobiliprotein family. As to quaternary structure, heterodimer of an alpha and a beta subunit. Part of 2 PBS rod complexes, the conventional PBS rod and a photosystem I-specific CpcL-PBS rod. Post-translationally, contains two covalently linked bilin chromophores.

It is found in the cellular thylakoid membrane. Its function is as follows. Light-harvesting photosynthetic bile pigment-protein from the phycobiliprotein complex (phycobilisome, PBS). Phycocyanin is the major phycobiliprotein in the PBS rod. The chain is C-phycocyanin beta subunit (cpcB) from Nostoc sp. (strain PCC 7120 / SAG 25.82 / UTEX 2576).